The sequence spans 663 residues: Methionine--tRNA ligase (663 aa).

Positions 10–20 (AYTNGPLHLGH) match the 'HIGH' region motif. Zn(2+)-binding residues include cysteine 142, cysteine 145, cysteine 154, and cysteine 157. The 'KMSKS' region motif lies at 323-327 (KMSTS). An ATP-binding site is contributed by threonine 326. Residues 563–663 (YFGNVDLRVG…RDLPVGSKIH (101 aa)) form the tRNA-binding domain.

Belongs to the class-I aminoacyl-tRNA synthetase family. MetG type 1 subfamily. As to quaternary structure, homodimer. It depends on Zn(2+) as a cofactor.

It localises to the cytoplasm. The catalysed reaction is tRNA(Met) + L-methionine + ATP = L-methionyl-tRNA(Met) + AMP + diphosphate. Is required not only for elongation of protein synthesis but also for the initiation of all mRNA translation through initiator tRNA(fMet) aminoacylation. The polypeptide is Methionine--tRNA ligase (Methanococcus maripaludis (strain C7 / ATCC BAA-1331)).